The sequence spans 240 residues: Ubiquinone biosynthesis O-methyltransferase (240 aa).

S-adenosyl-L-methionine-binding residues include R44, G64, D85, and M129.

The protein belongs to the methyltransferase superfamily. UbiG/COQ3 family.

It catalyses the reaction a 3-demethylubiquinol + S-adenosyl-L-methionine = a ubiquinol + S-adenosyl-L-homocysteine + H(+). It carries out the reaction a 3-(all-trans-polyprenyl)benzene-1,2-diol + S-adenosyl-L-methionine = a 2-methoxy-6-(all-trans-polyprenyl)phenol + S-adenosyl-L-homocysteine + H(+). Its pathway is cofactor biosynthesis; ubiquinone biosynthesis. O-methyltransferase that catalyzes the 2 O-methylation steps in the ubiquinone biosynthetic pathway. The protein is Ubiquinone biosynthesis O-methyltransferase of Escherichia coli O81 (strain ED1a).